The sequence spans 277 residues: Large ribosomal subunit protein uL2 (277 aa).

The tract at residues T219 to K277 is disordered.

This sequence belongs to the universal ribosomal protein uL2 family. In terms of assembly, part of the 50S ribosomal subunit. Forms a bridge to the 30S subunit in the 70S ribosome.

Functionally, one of the primary rRNA binding proteins. Required for association of the 30S and 50S subunits to form the 70S ribosome, for tRNA binding and peptide bond formation. It has been suggested to have peptidyltransferase activity; this is somewhat controversial. Makes several contacts with the 16S rRNA in the 70S ribosome. This chain is Large ribosomal subunit protein uL2, found in Clostridium botulinum (strain Okra / Type B1).